Reading from the N-terminus, the 612-residue chain is Dihydroxy-acid dehydratase (612 aa).

Mg(2+) is bound at residue Asp81. Residue Cys122 coordinates [2Fe-2S] cluster. Mg(2+) is bound by residues Asp123 and Lys124. Lys124 is subject to N6-carboxylysine. Cys193 contributes to the [2Fe-2S] cluster binding site. Residue Glu489 coordinates Mg(2+). Ser515 (proton acceptor) is an active-site residue.

The protein belongs to the IlvD/Edd family. Homodimer. The cofactor is [2Fe-2S] cluster. It depends on Mg(2+) as a cofactor.

It carries out the reaction (2R)-2,3-dihydroxy-3-methylbutanoate = 3-methyl-2-oxobutanoate + H2O. It catalyses the reaction (2R,3R)-2,3-dihydroxy-3-methylpentanoate = (S)-3-methyl-2-oxopentanoate + H2O. The protein operates within amino-acid biosynthesis; L-isoleucine biosynthesis; L-isoleucine from 2-oxobutanoate: step 3/4. Its pathway is amino-acid biosynthesis; L-valine biosynthesis; L-valine from pyruvate: step 3/4. Its function is as follows. Functions in the biosynthesis of branched-chain amino acids. Catalyzes the dehydration of (2R,3R)-2,3-dihydroxy-3-methylpentanoate (2,3-dihydroxy-3-methylvalerate) into 2-oxo-3-methylpentanoate (2-oxo-3-methylvalerate) and of (2R)-2,3-dihydroxy-3-methylbutanoate (2,3-dihydroxyisovalerate) into 2-oxo-3-methylbutanoate (2-oxoisovalerate), the penultimate precursor to L-isoleucine and L-valine, respectively. The protein is Dihydroxy-acid dehydratase of Teredinibacter turnerae (strain ATCC 39867 / T7901).